A 136-amino-acid polypeptide reads, in one-letter code: Classical arabinogalactan protein 11 (136 aa).

An N-terminal signal peptide occupies residues 1–20; it reads MARLFVVVALLALAVGTVFA. Composition is skewed to low complexity over residues 24–56, 68–81, and 89–107; these read PSAA…ASSP, SAAS…APTV, and PEAD…PAAA. The tract at residues 24–115 is disordered; that stretch reads PSAAPTASPT…AAESPKSGAT (92 aa). Ser112 carries GPI-anchor amidated serine lipidation. Residues 113–136 constitute a propeptide, removed in mature form; it reads GATTNVKLSIAGTVAAAGFFIFSL.

This sequence belongs to the classical AGP family. In terms of processing, O-glycosylated on the hydroxyproline residues.

It localises to the cell membrane. Functionally, proteoglycan that seems to be implicated in diverse developmental roles such as differentiation, cell-cell recognition, embryogenesis and programmed cell death. This Arabidopsis thaliana (Mouse-ear cress) protein is Classical arabinogalactan protein 11 (AGP11).